The chain runs to 470 residues: FAD-dependent monooxygenase dpchE (470 aa).

An N-terminal signal peptide occupies residues 1 to 24 (MSEPHFKVIIVGGSITGLTLAHSL). Residues Glu35, Gly49, and Arg108 each contribute to the FAD site. Residue Asn128 is glycosylated (N-linked (GlcNAc...) asparagine). Arg193 is an active-site residue. The FAD site is built by Asp312 and Ala325. A helical membrane pass occupies residues 447–463 (WAVVSRSVLLLVGLAIL).

Belongs to the paxM FAD-dependent monooxygenase family. FAD is required as a cofactor.

The protein localises to the membrane. It participates in secondary metabolite biosynthesis; terpenoid biosynthesis. In terms of biological role, FAD-dependent monooxygenase; part of the gene cluster that mediates the biosynthesis of the diterpenoid pyrones higginsianins A and B. The first step of the pathway is the synthesis of the alpha-pyrone moiety by the polyketide synthase dpchA via condensation of one acetyl-CoA starter unit with 3 malonyl-CoA units and 2 methylations. The alpha-pyrone is then combined with geranylgeranyl pyrophosphate (GGPP) formed by the GGPP synthase dpchD through the action of the prenyltransferase dpchC to yield a linear alpha-pyrone diterpenoid. Subsequent steps in the diterpenoid pyrone biosynthetic pathway involve the decalin core formation, which is initiated by the epoxidation of the C10-C11 olefin by the FAD-dependent oxidoreductase dpchE, and is followed by a cyclization cascade catalyzed by the terpene cyclase dpchB. The short chain dehydrogenase/reductase dpchG then oxidizes the 8S hydroxy group to a ketone and the short chain dehydrogenase/reductase dpchH reduces the ketone to the 8R hydroxy group to yield higginsianin B. Finally, the FAD-dependent oxidoreductase dpchF converts higginsianin B into higginsianin A. The chain is FAD-dependent monooxygenase dpchE from Colletotrichum higginsianum (strain IMI 349063) (Crucifer anthracnose fungus).